Here is a 280-residue protein sequence, read N- to C-terminus: Small ribosomal subunit protein uS15m (280 aa).

Belongs to the universal ribosomal protein uS15 family. In terms of assembly, component of the mitochondrial ribosome small subunit (28S) which comprises a 12S rRNA and about 30 distinct proteins. As to expression, expressed in anterior and posterior midgut primordia in stage 11 embryos. In stage 13 embryos, expression is high in the developing midgut and hindgut. In stage 16 embryos, expression is elevated in the midgut, hindgut, and in a small region that will give rise to pharyngeal muscles and to the stomatogastric nervous system. In larvae, expression is predominant in the gut, and head, presumably in pharyngeal muscles.

It is found in the mitochondrion. Functionally, essential for gut mitochondrial activity. Might be involved in tissue specific growth factor production. The polypeptide is Small ribosomal subunit protein uS15m (bonsai) (Drosophila melanogaster (Fruit fly)).